Consider the following 146-residue polypeptide: MVNGINHMTFSVSNMDKAVSFYKHVFMEAPLVLGEKTAYFTIGGTWLALNLQPDIDRKEIRQSYTHIAFSIEESQLDAFYTRLLEAGADILPGRKRQVETEGKSIYFRDPDGHLLEVHTGTLAERLAHYEKTAPDMLVNIDEQNKK.

The 117-residue stretch at 4–120 folds into the VOC domain; sequence GINHMTFSVS…DGHLLEVHTG (117 aa). 3 residues coordinate Mg(2+): His-7, His-66, and Glu-116. Glu-116 serves as the catalytic Proton donor/acceptor.

The protein belongs to the fosfomycin resistance protein family. FosB subfamily. Homodimer. It depends on Mg(2+) as a cofactor.

It localises to the cytoplasm. In terms of biological role, metallothiol transferase which confers resistance to fosfomycin by catalyzing the addition of a thiol cofactor to fosfomycin. L-cysteine is probably the physiological thiol donor. The polypeptide is Metallothiol transferase FosB (Shouchella clausii (strain KSM-K16) (Alkalihalobacillus clausii)).